The sequence spans 150 residues: UPF0178 protein Rru_A0086 (150 aa).

This sequence belongs to the UPF0178 family.

The sequence is that of UPF0178 protein Rru_A0086 from Rhodospirillum rubrum (strain ATCC 11170 / ATH 1.1.1 / DSM 467 / LMG 4362 / NCIMB 8255 / S1).